The sequence spans 876 residues: Translation initiation factor IF-2 (876 aa).

The region spanning 378–547 is the tr-type G domain; that stretch reads TRPPIITIMG…LTQSEMLELK (170 aa). Positions 387 to 394 are G1; sequence GHVDHGKT. A GTP-binding site is contributed by 387–394; it reads GHVDHGKT. The tract at residues 412–416 is G2; it reads RITQH. Positions 433 to 436 are G3; sequence DTPG. GTP contacts are provided by residues 433–437 and 487–490; these read DTPGH and NKID. The tract at residues 487–490 is G4; sequence NKID. Residues 523-525 are G5; it reads SAK.

The protein belongs to the TRAFAC class translation factor GTPase superfamily. Classic translation factor GTPase family. IF-2 subfamily.

It localises to the cytoplasm. Its function is as follows. One of the essential components for the initiation of protein synthesis. Protects formylmethionyl-tRNA from spontaneous hydrolysis and promotes its binding to the 30S ribosomal subunits. Also involved in the hydrolysis of GTP during the formation of the 70S ribosomal complex. This is Translation initiation factor IF-2 from Buchnera aphidicola subsp. Baizongia pistaciae (strain Bp).